The chain runs to 113 residues: Large ribosomal subunit protein eL33 (113 aa).

This sequence belongs to the eukaryotic ribosomal protein eL33 family.

The chain is Large ribosomal subunit protein eL33 (RPL35A) from Tetrahymena thermophila (strain SB210).